The chain runs to 227 residues: Orotidine 5'-phosphate decarboxylase (227 aa).

Substrate-binding positions include Asp8, Lys30, 58 to 67 (DLKVHDIPNT), Thr117, Arg177, Gln186, Gly206, and Arg207. The active-site Proton donor is the Lys60.

This sequence belongs to the OMP decarboxylase family. Type 1 subfamily. In terms of assembly, homodimer.

The catalysed reaction is orotidine 5'-phosphate + H(+) = UMP + CO2. The protein operates within pyrimidine metabolism; UMP biosynthesis via de novo pathway; UMP from orotate: step 2/2. Functionally, catalyzes the decarboxylation of orotidine 5'-monophosphate (OMP) to uridine 5'-monophosphate (UMP). The chain is Orotidine 5'-phosphate decarboxylase from Campylobacter fetus subsp. fetus (strain 82-40).